A 255-amino-acid polypeptide reads, in one-letter code: CCAAT/enhancer-binding protein delta (255 aa).

3 disordered regions span residues 1 to 42 (MTCA…AAPA), 91 to 121 (GGPA…PGSL), and 138 to 206 (PAAQ…QEMQ). A Glycyl lysine isopeptide (Lys-Gly) (interchain with G-Cter in SUMO) cross-link involves residue K107. Over residues 141 to 161 (QPTPPASPDPPRRSPAPPAPG) the composition is skewed to pro residues. The span at 163 to 187 (ARDKAAGKRGPDRGSPEYRQRRERN) shows a compositional bias: basic and acidic residues. Residues 177-240 (SPEYRQRRER…AGLRRFFKQL (64 aa)) form the bZIP domain. A basic motif region spans residues 181 to 208 (RQRRERNNIAVRKSRDKAKRRNQEMQQK). The leucine-zipper stretch occupies residues 212–240 (LSAENEKLQQRVEQLTRDLAGLRRFFKQL).

It belongs to the bZIP family. C/EBP subfamily. As to quaternary structure, binds DNA as a homodimer and as a heterodimer. Can form stable heterodimers with CEBPA, CEBPB and CEBPE. Directly interacts with SPI1/PU.1; this interaction does not affect DNA-binding properties of each partner. Interacts with PRDM16.

It is found in the nucleus. Its function is as follows. Transcription activator that recognizes two different DNA motifs: the CCAAT homology common to many promoters and the enhanced core homology common to many enhancers. Important transcription factor regulating the expression of genes involved in immune and inflammatory responses. Transcriptional activator that enhances IL6 transcription alone and as heterodimer with CEBPB. This chain is CCAAT/enhancer-binding protein delta (CEBPD), found in Ovis aries (Sheep).